Consider the following 210-residue polypeptide: uncharacterized protein (210 aa).

Disordered stretches follow at residues 1 to 21 and 168 to 210; these read MHRLFGRKPPTQPTASLTDAI and EALQ…STAQ. Residues 21–175 are a coiled coil; it reads IDSLDKRSDS…ELEALQQESS (155 aa). Residues 174–184 are compositionally biased toward polar residues; that stretch reads SSWLGDQSTAE.

Belongs to the SNF7 family.

This is an uncharacterized protein from Schizosaccharomyces pombe (strain 972 / ATCC 24843) (Fission yeast).